The sequence spans 551 residues: Chaperonin GroEL (551 aa).

ATP contacts are provided by residues 30-33, Lys-51, 87-91, Gly-415, and Asp-496; these read TLGP and DGTTT.

It belongs to the chaperonin (HSP60) family. As to quaternary structure, forms a cylinder of 14 subunits composed of two heptameric rings stacked back-to-back. Interacts with the co-chaperonin GroES.

It localises to the cytoplasm. The catalysed reaction is ATP + H2O + a folded polypeptide = ADP + phosphate + an unfolded polypeptide.. In terms of biological role, together with its co-chaperonin GroES, plays an essential role in assisting protein folding. The GroEL-GroES system forms a nano-cage that allows encapsulation of the non-native substrate proteins and provides a physical environment optimized to promote and accelerate protein folding. In Maricaulis maris (strain MCS10) (Caulobacter maris), this protein is Chaperonin GroEL.